Reading from the N-terminus, the 135-residue chain is ATP synthase epsilon chain (135 aa).

The protein belongs to the ATPase epsilon chain family. F-type ATPases have 2 components, CF(1) - the catalytic core - and CF(0) - the membrane proton channel. CF(1) has five subunits: alpha(3), beta(3), gamma(1), delta(1), epsilon(1). CF(0) has three main subunits: a, b and c.

The protein resides in the cell inner membrane. Produces ATP from ADP in the presence of a proton gradient across the membrane. The chain is ATP synthase epsilon chain from Rhizobium etli (strain ATCC 51251 / DSM 11541 / JCM 21823 / NBRC 15573 / CFN 42).